Consider the following 238-residue polypeptide: Ribosomal RNA small subunit methyltransferase G (238 aa).

S-adenosyl-L-methionine contacts are provided by residues Gly-106, Leu-111, 157 to 158 (IE), and Arg-170.

Belongs to the methyltransferase superfamily. RNA methyltransferase RsmG family.

Its subcellular location is the cytoplasm. The catalysed reaction is guanosine(527) in 16S rRNA + S-adenosyl-L-methionine = N(7)-methylguanosine(527) in 16S rRNA + S-adenosyl-L-homocysteine. Its function is as follows. Specifically methylates the N7 position of guanine in position 527 of 16S rRNA. This chain is Ribosomal RNA small subunit methyltransferase G, found in Psychrobacter cryohalolentis (strain ATCC BAA-1226 / DSM 17306 / VKM B-2378 / K5).